The following is a 469-amino-acid chain: 3-isopropylmalate dehydratase large subunit (469 aa).

3 residues coordinate [4Fe-4S] cluster: Cys350, Cys410, and Cys413.

This sequence belongs to the aconitase/IPM isomerase family. LeuC type 1 subfamily. Heterodimer of LeuC and LeuD. The cofactor is [4Fe-4S] cluster.

The catalysed reaction is (2R,3S)-3-isopropylmalate = (2S)-2-isopropylmalate. The protein operates within amino-acid biosynthesis; L-leucine biosynthesis; L-leucine from 3-methyl-2-oxobutanoate: step 2/4. Functionally, catalyzes the isomerization between 2-isopropylmalate and 3-isopropylmalate, via the formation of 2-isopropylmaleate. The sequence is that of 3-isopropylmalate dehydratase large subunit from Brucella abortus (strain S19).